Consider the following 270-residue polypeptide: Acyl-[acyl-carrier-protein]--UDP-N-acetylglucosamine O-acyltransferase (270 aa).

The protein belongs to the transferase hexapeptide repeat family. LpxA subfamily. As to quaternary structure, homotrimer.

The protein localises to the cytoplasm. It carries out the reaction a (3R)-hydroxyacyl-[ACP] + UDP-N-acetyl-alpha-D-glucosamine = a UDP-3-O-[(3R)-3-hydroxyacyl]-N-acetyl-alpha-D-glucosamine + holo-[ACP]. It participates in glycolipid biosynthesis; lipid IV(A) biosynthesis; lipid IV(A) from (3R)-3-hydroxytetradecanoyl-[acyl-carrier-protein] and UDP-N-acetyl-alpha-D-glucosamine: step 1/6. Involved in the biosynthesis of lipid A, a phosphorylated glycolipid that anchors the lipopolysaccharide to the outer membrane of the cell. The sequence is that of Acyl-[acyl-carrier-protein]--UDP-N-acetylglucosamine O-acyltransferase from Helicobacter pylori (strain G27).